The following is a 197-amino-acid chain: ATP-dependent Clp protease proteolytic subunit 1 (197 aa).

Histidine 126 is a catalytic residue.

The protein belongs to the peptidase S14 family. In terms of assembly, fourteen ClpP subunits assemble into 2 heptameric rings which stack back to back to give a disk-like structure with a central cavity, resembling the structure of eukaryotic proteasomes.

The protein localises to the cytoplasm. The enzyme catalyses Hydrolysis of proteins to small peptides in the presence of ATP and magnesium. alpha-casein is the usual test substrate. In the absence of ATP, only oligopeptides shorter than five residues are hydrolyzed (such as succinyl-Leu-Tyr-|-NHMec, and Leu-Tyr-Leu-|-Tyr-Trp, in which cleavage of the -Tyr-|-Leu- and -Tyr-|-Trp bonds also occurs).. Functionally, cleaves peptides in various proteins in a process that requires ATP hydrolysis. Has a chymotrypsin-like activity. Plays a major role in the degradation of misfolded proteins. This is ATP-dependent Clp protease proteolytic subunit 1 from Nocardia farcinica (strain IFM 10152).